The chain runs to 62 residues: Small ribosomal subunit protein eS27 (62 aa).

Positions 17, 20, 36, and 39 each coordinate Zn(2+). The C4-type zinc finger occupies 17–39 (CPDCENEQLVFEKATSVVECTVC).

It belongs to the eukaryotic ribosomal protein eS27 family. As to quaternary structure, part of the 30S ribosomal subunit. The cofactor is Zn(2+).

The sequence is that of Small ribosomal subunit protein eS27 from Methanocorpusculum labreanum (strain ATCC 43576 / DSM 4855 / Z).